A 422-amino-acid polypeptide reads, in one-letter code: Serine--tRNA ligase (422 aa).

229-231 (TAE) lines the L-serine pocket. 260 to 262 (RKE) is a binding site for ATP. An L-serine-binding site is contributed by Glu-283. Position 347 to 350 (347 to 350 (EISS)) interacts with ATP. Residue Ser-383 participates in L-serine binding.

This sequence belongs to the class-II aminoacyl-tRNA synthetase family. Type-1 seryl-tRNA synthetase subfamily. Homodimer. The tRNA molecule binds across the dimer.

The protein resides in the cytoplasm. The catalysed reaction is tRNA(Ser) + L-serine + ATP = L-seryl-tRNA(Ser) + AMP + diphosphate + H(+). The enzyme catalyses tRNA(Sec) + L-serine + ATP = L-seryl-tRNA(Sec) + AMP + diphosphate + H(+). Its pathway is aminoacyl-tRNA biosynthesis; selenocysteinyl-tRNA(Sec) biosynthesis; L-seryl-tRNA(Sec) from L-serine and tRNA(Sec): step 1/1. Catalyzes the attachment of serine to tRNA(Ser). Is also able to aminoacylate tRNA(Sec) with serine, to form the misacylated tRNA L-seryl-tRNA(Sec), which will be further converted into selenocysteinyl-tRNA(Sec). The protein is Serine--tRNA ligase of Citrifermentans bemidjiense (strain ATCC BAA-1014 / DSM 16622 / JCM 12645 / Bem) (Geobacter bemidjiensis).